Consider the following 75-residue polypeptide: uncharacterized protein (75 aa).

This is an uncharacterized protein from Saccharomyces cerevisiae (strain ATCC 204508 / S288c) (Baker's yeast).